The chain runs to 274 residues: Thiamine kinase (274 aa).

This sequence belongs to the thiamine kinase family.

It catalyses the reaction thiamine + ATP = thiamine phosphate + ADP + H(+). It participates in cofactor biosynthesis; thiamine diphosphate biosynthesis; thiamine phosphate from thiamine: step 1/1. In terms of biological role, catalyzes the ATP-dependent phosphorylation of thiamine to thiamine phosphate. Is involved in thiamine salvage. This chain is Thiamine kinase, found in Escherichia coli O157:H7.